An 820-amino-acid chain; its full sequence is LPS-assembly protein LptD (820 aa).

The interval 1–27 (MDLSSLPDPLRPTHSRLPARRRDRAEP) is disordered. Over residues 13–22 (THSRLPARRR) the composition is skewed to basic residues.

This sequence belongs to the LptD family. As to quaternary structure, component of the lipopolysaccharide transport and assembly complex. Interacts with LptE and LptA.

Its function is as follows. Together with LptE, is involved in the assembly of lipopolysaccharide (LPS) at the surface of the outer membrane. The protein is LPS-assembly protein LptD of Paracidovorax citrulli (strain AAC00-1) (Acidovorax citrulli).